The chain runs to 333 residues: D-2-hydroxyacid dehydrogenase (NAD+) (333 aa).

Tyrosine 100 contacts 4-methyl-2-oxopentanoate. The NAD(+) site is built by histidine 155, isoleucine 156, aspartate 175, valine 205, asparagine 211, threonine 232, arginine 234, and aspartate 258. The active site involves arginine 234. Glutamate 263 is a catalytic residue. Histidine 295 is a 4-methyl-2-oxopentanoate binding site. Histidine 295 (proton donor) is an active-site residue.

It belongs to the D-isomer specific 2-hydroxyacid dehydrogenase family. As to quaternary structure, homodimer.

It catalyses the reaction a (2R)-2-hydroxycarboxylate + NAD(+) = a 2-oxocarboxylate + NADH + H(+). The enzyme catalyses (2R)-hydroxy-4-methylpentanoate + NAD(+) = 4-methyl-2-oxopentanoate + NADH + H(+). The catalysed reaction is (R)-3-phenyllactate + NAD(+) = 3-phenylpyruvate + NADH + H(+). Its activity is regulated as follows. Completely inhibited In the presence of 0.1 mM Hg(2+). No influence on the activity could be detected with Mg(2+) and Ca(2+) and only very weak effects with Cd(2+), Co(2+) and Mn(2+). Reducing agents and thiol group reagents do not affect catalytic activity. Functionally, catalyzes the NADH-dependent reversible reduction of various 2-ketocarboxylic acids to the corresponding D-2-hydroxycarboxylic acids. In vitro can use various substrates, including 4-methyl-2-oxopentanoate (2-oxoisocaproate), 2-oxopentanoate, 2-oxohexanoate and phenylpyruvate. The sequence is that of D-2-hydroxyacid dehydrogenase (NAD+) from Lacticaseibacillus paracasei (Lactobacillus paracasei).